Consider the following 125-residue polypeptide: Protein ELF4-LIKE 1 (125 aa).

A compositionally biased stretch (polar residues) spans 1–18 (MEASRNRSLVGNNRSPEM). Residues 1 to 28 (MEASRNRSLVGNNRSPEMNENDGEDVAA) are disordered.

It belongs to the EARLY FLOWERING 4 family. In terms of assembly, homodimer.

The protein resides in the nucleus. In terms of biological role, component of the central CCA1/LHY-TOC1 feedback loop in the circadian clock that promotes clock accuracy and is required for sustained rhythms in the absence of daily light/dark cycles. The sequence is that of Protein ELF4-LIKE 1 (EFL1) from Arabidopsis thaliana (Mouse-ear cress).